We begin with the raw amino-acid sequence, 408 residues long: Histidine--tRNA ligase (408 aa).

This sequence belongs to the class-II aminoacyl-tRNA synthetase family. Homodimer.

It is found in the cytoplasm. It carries out the reaction tRNA(His) + L-histidine + ATP = L-histidyl-tRNA(His) + AMP + diphosphate + H(+). This chain is Histidine--tRNA ligase, found in Campylobacter jejuni subsp. jejuni serotype O:6 (strain 81116 / NCTC 11828).